The following is a 456-amino-acid chain: Bifunctional protein GlmU (456 aa).

A pyrophosphorylase region spans residues 1-229 (MLNSAMSVVI…ISETDGVNNR (229 aa)). UDP-N-acetyl-alpha-D-glucosamine-binding positions include 11–14 (LAAG), K25, Q76, 81–82 (GT), 103–105 (YGD), G140, E154, N169, and N227. D105 is a Mg(2+) binding site. Residue N227 coordinates Mg(2+). The tract at residues 230 to 250 (LQLSRLERIYQAEQAEKLLLS) is linker. The tract at residues 251-456 (GVMLRDPARF…QGWQRPVKKK (206 aa)) is N-acetyltransferase. The UDP-N-acetyl-alpha-D-glucosamine site is built by R333 and K351. H363 (proton acceptor) is an active-site residue. UDP-N-acetyl-alpha-D-glucosamine is bound by residues Y366 and N377. Acetyl-CoA contacts are provided by residues A380, 386–387 (NY), S405, A423, and R440.

In the N-terminal section; belongs to the N-acetylglucosamine-1-phosphate uridyltransferase family. This sequence in the C-terminal section; belongs to the transferase hexapeptide repeat family. In terms of assembly, homotrimer. Mg(2+) is required as a cofactor.

It localises to the cytoplasm. The catalysed reaction is alpha-D-glucosamine 1-phosphate + acetyl-CoA = N-acetyl-alpha-D-glucosamine 1-phosphate + CoA + H(+). It carries out the reaction N-acetyl-alpha-D-glucosamine 1-phosphate + UTP + H(+) = UDP-N-acetyl-alpha-D-glucosamine + diphosphate. The protein operates within nucleotide-sugar biosynthesis; UDP-N-acetyl-alpha-D-glucosamine biosynthesis; N-acetyl-alpha-D-glucosamine 1-phosphate from alpha-D-glucosamine 6-phosphate (route II): step 2/2. It functions in the pathway nucleotide-sugar biosynthesis; UDP-N-acetyl-alpha-D-glucosamine biosynthesis; UDP-N-acetyl-alpha-D-glucosamine from N-acetyl-alpha-D-glucosamine 1-phosphate: step 1/1. Its pathway is bacterial outer membrane biogenesis; LPS lipid A biosynthesis. Catalyzes the last two sequential reactions in the de novo biosynthetic pathway for UDP-N-acetylglucosamine (UDP-GlcNAc). The C-terminal domain catalyzes the transfer of acetyl group from acetyl coenzyme A to glucosamine-1-phosphate (GlcN-1-P) to produce N-acetylglucosamine-1-phosphate (GlcNAc-1-P), which is converted into UDP-GlcNAc by the transfer of uridine 5-monophosphate (from uridine 5-triphosphate), a reaction catalyzed by the N-terminal domain. The chain is Bifunctional protein GlmU from Salmonella heidelberg (strain SL476).